A 1374-amino-acid chain; its full sequence is MSSSFFNPSFAFSSHFDPDGAPLSELSWPSSLAVVAVSFSGLFAVIVLMLACLCCKKGGIGFKEFENAEGDEYAADLAQGSPATAAQNGPDVYVLPLTEVSLPMAKQPGRSVQLLKSTDVGRHSLLYLKEIGRGWFGKVFLGEVNSGISSAQVVVKELQASASVQEQMQFLEEVQPYRALKHSNLLQCLAQCAEVTPYLLVMEFCPLGDLKGYLRSCRVAESMAPDPRTLQRMACEVACGVLHLHRNNFVHSDLALRNCLLTADLTVKIGDYGLAHCKYREDYFVTADQLWVPLRWIAPELVDEVHSNLLVVDQTKSGNVWSLGVTIWELFELGTQPYPQHSDQQVLAYTVREQQLKLPKPQLQLTLSDRWYEVMQFCWLQPEQRPTAEEVHLLLSYLCAKGATEAEEEFERRWRSLRPGGGGVGPGPGAAGPMLGGVVELAAASSFPLLEQFAGDGFHADGDDVLTVTETSRGLNFEYKWEAGRGAEAFPATLSPGRTARLQELCAPDGAPPGVVPVLSAHSPSLGSEYFIRLEEAAPAAGHDPDCAGCAPSPPATADQDDDSDGSTAASLAMEPLLGHGPPVDVPWGRGDHYPRRSLARDPLCPSRSPSPSAGPLSLAEGGAEDADWGVAAFCPAFFEDPLGTSPLGSSGAPPLPLTGEDELEEVGARRAAQRGHWRSNVSANNNSGSRCPESWDPVSAGGHAEGCPSPKQTPRASPEPGYPGEPLLGLQAASAQEPGCCPGLPHLCSAQGLAPAPCLVTPSWTETASSGGDHPQAEPKLATEAEGTTGPRLPLPSVPSPSQEGAPLPSEEASAPDAPDALPDSPTPATGGEVSAIKLASALNGSSSSPEVEAPSSEDEDTAEATSGIFTDTSSDGLQARRPDVVPAFRSLQKQVGTPDSLDSLDIPSSASDGGYEVFSPSATGPSGGQPRALDSGYDTENYESPEFVLKEAQEGCEPQAFAELASEGEGPGPETRLSTSLSGLNEKNPYRDSAYFSDLEAEAEATSGPEKKCGGDRAPGPELGLPSTGQPSEQVCLRPGVSGEAQGSGPGEVLPPLLQLEGSSPEPSTCPSGLVPEPPEPQGPAKVRPGPSPSCSQFFLLTPVPLRSEGNSSEFQGPPGLLSGPAPQKRMGGPGTPRAPLRLALPGLPAALEGRPEEEEEDSEDSDESDEELRCYSVQEPSEDSEEEAPAVPVVVAESQSARNLRSLLKMPSLLSETFCEDLERKKKAVSFFDDVTVYLFDQESPTRELGEPFPGAKESPPTFLRGSPGSPSAPNRPQQADGSPNGSTAEEGGGFAWDDDFPLMTAKAAFAMALDPAAPAPAAPTPTPAPFSRFTVSPAPTSRFSITHVSDSDAESKRGPEAGAGGESKEA.

A helical membrane pass occupies residues 32–52 (LAVVAVSFSGLFAVIVLMLAC). The Protein kinase domain maps to 125–395 (LLYLKEIGRG…PTAEEVHLLL (271 aa)). ATP is bound by residues 131–139 (IGRGWFGKV) and Lys156. Asp253 (proton acceptor) is an active-site residue. A Phosphoserine modification is found at Ser495. Disordered stretches follow at residues 542-622 (GHDP…LAEG), 667-731 (VGAR…LLGL), 765-1195 (WTET…PAVP), 1245-1302 (QESP…AWDD), and 1320-1374 (AAPA…SKEA). Residues 606 to 620 (PSRSPSPSAGPLSLA) are compositionally biased toward low complexity. Residues 680–690 (SNVSANNNSGS) show a composition bias toward polar residues. 3 stretches are compositionally biased toward low complexity: residues 719–731 (PEPG…LLGL), 801–831 (SPSQ…TPAT), and 847–856 (SSSSPEVEAP). Over residues 865 to 878 (EATSGIFTDTSSDG) the composition is skewed to polar residues. Positions 900–914 (PDSLDSLDIPSSASD) are enriched in low complexity. A compositionally biased stretch (polar residues) spans 978–987 (RLSTSLSGLN). Phosphoserine is present on Ser1029. Polar residues predominate over residues 1063 to 1073 (EGSSPEPSTCP). The span at 1138 to 1155 (TPRAPLRLALPGLPAALE) shows a compositional bias: low complexity. Over residues 1158–1173 (PEEEEEDSEDSDESDE) the composition is skewed to acidic residues. 5 positions are modified to phosphoserine: Ser1168, Ser1171, Ser1184, Ser1187, and Ser1262. Polar residues predominate over residues 1272–1291 (GSPSAPNRPQQADGSPNGST). Residues 1321–1332 (APAPAAPTPTPA) are compositionally biased toward pro residues. Positions 1337 to 1352 (FTVSPAPTSRFSITHV) are enriched in polar residues. Over residues 1353–1363 (SDSDAESKRGP) the composition is skewed to basic and acidic residues. Gly residues predominate over residues 1365–1374 (AGAGGESKEA).

It belongs to the protein kinase superfamily. Tyr protein kinase family. As to quaternary structure, interacts with CDK5. Post-translationally, autophosphorylated. Phosphorylated by CDK5. Expressed in brain.

It localises to the membrane. Its subcellular location is the cytoplasm. The protein localises to the perinuclear region. The enzyme catalyses L-seryl-[protein] + ATP = O-phospho-L-seryl-[protein] + ADP + H(+). It catalyses the reaction L-threonyl-[protein] + ATP = O-phospho-L-threonyl-[protein] + ADP + H(+). In terms of biological role, may be involved in neuronal differentiation. The protein is Serine/threonine-protein kinase LMTK1 (AATK) of Homo sapiens (Human).